The sequence spans 293 residues: NAD kinase (293 aa).

The active-site Proton acceptor is aspartate 74. Residues 74–75, arginine 79, 148–149, arginine 176, aspartate 178, 189–194, and glutamine 248 each bind NAD(+); these read DG, NE, and TAYALS.

Belongs to the NAD kinase family. It depends on a divalent metal cation as a cofactor.

The protein localises to the cytoplasm. The enzyme catalyses NAD(+) + ATP = ADP + NADP(+) + H(+). Involved in the regulation of the intracellular balance of NAD and NADP, and is a key enzyme in the biosynthesis of NADP. Catalyzes specifically the phosphorylation on 2'-hydroxyl of the adenosine moiety of NAD to yield NADP. In Blochmanniella floridana, this protein is NAD kinase.